We begin with the raw amino-acid sequence, 115 residues long: Meromycolate extension acyl carrier protein (115 aa).

Residues 3–81 (VTQEEIIAGI…DVVTYIQKLE (79 aa)) enclose the Carrier domain. Serine 41 carries the post-translational modification O-(pantetheine 4'-phosphoryl)serine.

It belongs to the acyl carrier protein (ACP) family. Post-translationally, 4'-phosphopantetheine is transferred from CoA to a specific serine of apo-AcpM.

The protein localises to the cytoplasm. Its function is as follows. Acyl carrier protein involved in meromycolate extension. The sequence is that of Meromycolate extension acyl carrier protein (acpM) from Mycobacterium leprae (strain TN).